We begin with the raw amino-acid sequence, 204 residues long: ATP synthase subunit 4, mitochondrial (204 aa).

A run of 2 helical transmembrane segments spans residues Gly27–Val47 and Ile52–Tyr72.

F-type ATP synthases have 2 components, the catalytic core F(1) and the membrane-embedded component F(0), linked together by a central stalk and a peripheral stalk. The central stalk, also called rotor shaft, is often seen as part of F(1). The peripheral stalk is seen as part of F(0). F(0) contains the membrane channel next to the rotor. F-type ATP synthases form dimers but each monomer functions independently in ATP generation. The dimer consists of 18 different polypeptides: ATP1 (subunit alpha, part of F(1), 3 molecules per monomer), ATP2 (subunit beta, part of F(1), 3 molecules per monomer), ATP3 (subunit gamma, part of the central stalk), ATP4 (subunit b, part of the peripheral stalk), ATP5/OSCP (subunit 5/OSCP, part of the peripheral stalk), ATP6 (subunit a, part of the peripheral stalk), ATP7 (subunit d, part of the peripheral stalk), ATP8 (subunit 8, part of the peripheral stalk), OLI1 (subunit c, part of the rotor, 10 molecules per monomer), ATP14 (subunit h, part of the peripheral stalk), ATP15 (subunit epsilon, part of the central stalk), ATP16 (subunit delta, part of the central stalk), ATP17 (subunit f, part of the peripheral stalk), ATP18 (subunit i/j, part of the peripheral stalk). Dimer-specific subunits are ATP19 (subunit k, at interface between monomers), ATP20 (subunit g, at interface between monomers), TIM11 (subunit e, at interface between monomers). Also contains subunit L.

It is found in the mitochondrion inner membrane. Functionally, mitochondrial membrane ATP synthase (F(1)F(0) ATP synthase or Complex V) produces ATP from ADP in the presence of a proton gradient across the membrane which is generated by electron transport complexes of the respiratory chain. F-type ATP synthases consist of two structural domains, F(1) - containing the extramembraneous catalytic core, and F(0) - containing the membrane proton channel, linked together by a central stalk and a peripheral stalk. During catalysis, ATP synthesis in the catalytic domain of F(1) is coupled via a rotary mechanism of the central stalk subunits to proton translocation. Part of the complex F(0) domain and the peripheral stalk, which acts as a stator to hold the catalytic alpha/ATP1(3)beta/ATP2(3) subcomplex and subunit a/ATP6 static relative to the rotary elements. In Pichia angusta (Yeast), this protein is ATP synthase subunit 4, mitochondrial.